We begin with the raw amino-acid sequence, 81 residues long: Large ribosomal subunit protein bL27m (81 aa).

Residues 1 to 11 (MATKKSGGSSR) are compositionally biased toward polar residues. Residues 1–20 (MATKKSGGSSRNGRDSKGRR) are disordered.

Belongs to the bacterial ribosomal protein bL27 family.

Its subcellular location is the mitochondrion. This Reclinomonas americana protein is Large ribosomal subunit protein bL27m (RPL27).